We begin with the raw amino-acid sequence, 498 residues long: Glycerol kinase (498 aa).

Threonine 12 lines the ADP pocket. The ATP site is built by threonine 12, threonine 13, and serine 14. Threonine 12 provides a ligand contact to sn-glycerol 3-phosphate. Arginine 16 lines the ADP pocket. 4 residues coordinate sn-glycerol 3-phosphate: arginine 82, glutamate 83, tyrosine 134, and aspartate 243. Arginine 82, glutamate 83, tyrosine 134, aspartate 243, and glutamine 244 together coordinate glycerol. Residues threonine 265 and glycine 308 each coordinate ADP. Residues threonine 265, glycine 308, glutamine 312, and glycine 409 each contribute to the ATP site. Residues glycine 409 and asparagine 413 each coordinate ADP.

The protein belongs to the FGGY kinase family. Homotetramer and homodimer (in equilibrium).

The enzyme catalyses glycerol + ATP = sn-glycerol 3-phosphate + ADP + H(+). The protein operates within polyol metabolism; glycerol degradation via glycerol kinase pathway; sn-glycerol 3-phosphate from glycerol: step 1/1. Activated by phosphorylation and inhibited by fructose 1,6-bisphosphate (FBP). Its function is as follows. Key enzyme in the regulation of glycerol uptake and metabolism. Catalyzes the phosphorylation of glycerol to yield sn-glycerol 3-phosphate. The protein is Glycerol kinase of Clostridium botulinum (strain ATCC 19397 / Type A).